Consider the following 204-residue polypeptide: Holliday junction branch migration complex subunit RuvA (204 aa).

A domain I region spans residues 1–64; that stretch reads MIGRLRGIIL…EDAQLLYGFN (64 aa). The domain II stretch occupies residues 65 to 142; sequence NKQERALFRE…KGLNGDLFNN (78 aa). The interval 143-155 is flexible linker; sequence TGDISLPTASPQT. The domain III stretch occupies residues 156 to 204; sequence SDADIEAEAASALVALGYKPQEASRLVSKIAKPGADCETLIRDALRAAL.

It belongs to the RuvA family. As to quaternary structure, homotetramer. Forms an RuvA(8)-RuvB(12)-Holliday junction (HJ) complex. HJ DNA is sandwiched between 2 RuvA tetramers; dsDNA enters through RuvA and exits via RuvB. An RuvB hexamer assembles on each DNA strand where it exits the tetramer. Each RuvB hexamer is contacted by two RuvA subunits (via domain III) on 2 adjacent RuvB subunits; this complex drives branch migration. In the full resolvosome a probable DNA-RuvA(4)-RuvB(12)-RuvC(2) complex forms which resolves the HJ.

The protein localises to the cytoplasm. In terms of biological role, the RuvA-RuvB-RuvC complex processes Holliday junction (HJ) DNA during genetic recombination and DNA repair, while the RuvA-RuvB complex plays an important role in the rescue of blocked DNA replication forks via replication fork reversal (RFR). RuvA specifically binds to HJ cruciform DNA, conferring on it an open structure. The RuvB hexamer acts as an ATP-dependent pump, pulling dsDNA into and through the RuvAB complex. HJ branch migration allows RuvC to scan DNA until it finds its consensus sequence, where it cleaves and resolves the cruciform DNA. The chain is Holliday junction branch migration complex subunit RuvA from Yersinia pseudotuberculosis serotype O:1b (strain IP 31758).